The sequence spans 299 residues: Nucleotide-binding protein AFE_3021 (299 aa).

11 to 18 is a binding site for ATP; sequence GLSGSGKS. Residue 62–65 coordinates GTP; the sequence is DVRN.

The protein belongs to the RapZ-like family.

Functionally, displays ATPase and GTPase activities. The sequence is that of Nucleotide-binding protein AFE_3021 from Acidithiobacillus ferrooxidans (strain ATCC 23270 / DSM 14882 / CIP 104768 / NCIMB 8455) (Ferrobacillus ferrooxidans (strain ATCC 23270)).